The chain runs to 319 residues: uncharacterized protein (319 aa).

Positions 1–27 (MYKKFVPFAVFLFLFFVSFEMMENPHA) are cleaved as a signal peptide. The region spanning 130–306 (PMVAFLINVA…QIKDKGYALG (177 aa)) is the NodB homology domain.

This sequence belongs to the polysaccharide deacetylase family.

This is an uncharacterized protein from Bacillus subtilis (strain 168).